A 122-amino-acid chain; its full sequence is Small ribosomal subunit protein uS13 (122 aa).

The tract at residues 99–122 (RGQRTHTNARTRKGPAKAIAGKKK) is disordered.

The protein belongs to the universal ribosomal protein uS13 family. As to quaternary structure, part of the 30S ribosomal subunit. Forms a loose heterodimer with protein S19. Forms two bridges to the 50S subunit in the 70S ribosome.

Functionally, located at the top of the head of the 30S subunit, it contacts several helices of the 16S rRNA. In the 70S ribosome it contacts the 23S rRNA (bridge B1a) and protein L5 of the 50S subunit (bridge B1b), connecting the 2 subunits; these bridges are implicated in subunit movement. Contacts the tRNAs in the A and P-sites. The polypeptide is Small ribosomal subunit protein uS13 (Bradyrhizobium diazoefficiens (strain JCM 10833 / BCRC 13528 / IAM 13628 / NBRC 14792 / USDA 110)).